A 689-amino-acid polypeptide reads, in one-letter code: Methionine--tRNA ligase (689 aa).

Residues 15-25 (PYANGPIHLGH) carry the 'HIGH' region motif. The Zn(2+) site is built by Cys146, Cys149, Cys159, and Cys162. The 'KMSKS' region signature appears at 332–336 (KMSKS). Lys335 is an ATP binding site. The interval 546 to 577 (KDNLQPTEAPKADKKADKKVEKKATTGDPLTD) is disordered. Residues 555-570 (PKADKKADKKVEKKAT) show a composition bias toward basic and acidic residues. The tRNA-binding domain occupies 588-689 (DFAKLDLRIA…QGAKPGMRVK (102 aa)).

It belongs to the class-I aminoacyl-tRNA synthetase family. MetG type 1 subfamily. In terms of assembly, homodimer. The cofactor is Zn(2+).

The protein resides in the cytoplasm. It carries out the reaction tRNA(Met) + L-methionine + ATP = L-methionyl-tRNA(Met) + AMP + diphosphate. In terms of biological role, is required not only for elongation of protein synthesis but also for the initiation of all mRNA translation through initiator tRNA(fMet) aminoacylation. This Shewanella denitrificans (strain OS217 / ATCC BAA-1090 / DSM 15013) protein is Methionine--tRNA ligase.